We begin with the raw amino-acid sequence, 287 residues long: uncharacterized protein (287 aa).

Active-site charge relay system residues include Thr-43 and Tyr-104. The active-site Proton donor is Tyr-130. The active-site Schiff-base intermediate with substrate is the Lys-158.

This sequence belongs to the DapA family. In terms of assembly, homotetramer.

The protein resides in the cytoplasm. This is an uncharacterized protein from Pyrococcus horikoshii (strain ATCC 700860 / DSM 12428 / JCM 9974 / NBRC 100139 / OT-3).